We begin with the raw amino-acid sequence, 180 residues long: RNA polymerase sigma-E factor (180 aa).

The Polymerase core binding motif lies at 36–49 (DLLQTALARTYGRW). The segment at residues 130–149 (TEETAAALGMSAGTVKSTLH) is a DNA-binding region (H-T-H motif).

This sequence belongs to the sigma-70 factor family. ECF subfamily.

Its subcellular location is the cytoplasm. Its function is as follows. Sigma factors are initiation factors that promote the attachment of RNA polymerase to specific initiation sites and are then released. This sigma factor is required for the synthesis of the antibiotic actinomycin. The chain is RNA polymerase sigma-E factor (sigE) from Streptomyces antibioticus.